A 46-amino-acid polypeptide reads, in one-letter code: Photosystem II reaction center protein K (46 aa).

The propeptide occupies 1 to 9 (MLILLNTFA). A helical membrane pass occupies residues 25–45 (LPLIPLFFFLLVFVWQAAVGF).

Belongs to the PsbK family. As to quaternary structure, PSII is composed of 1 copy each of membrane proteins PsbA, PsbB, PsbC, PsbD, PsbE, PsbF, PsbH, PsbI, PsbJ, PsbK, PsbL, PsbM, PsbT, PsbX, PsbY, Psb30/Ycf12, peripheral proteins PsbO, CyanoQ (PsbQ), PsbU, PsbV and a large number of cofactors. It forms dimeric complexes.

The protein resides in the cellular thylakoid membrane. Its function is as follows. One of the components of the core complex of photosystem II (PSII). PSII is a light-driven water:plastoquinone oxidoreductase that uses light energy to abstract electrons from H(2)O, generating O(2) and a proton gradient subsequently used for ATP formation. It consists of a core antenna complex that captures photons, and an electron transfer chain that converts photonic excitation into a charge separation. In Prochlorococcus marinus (strain MIT 9215), this protein is Photosystem II reaction center protein K.